The primary structure comprises 288 residues: Serine/threonine-protein phosphatase PGAM5, mitochondrial (288 aa).

Over 1–6 the chain is Mitochondrial matrix; sequence MAFRQA. Residues 7-29 traverse the membrane as a helical segment; sequence LQLAACGLAGGSAAVLFSAVAVG. Residues 30–288 lie on the Mitochondrial intermembrane side of the membrane; the sequence is KPRAGGDADT…FMPPDKITRS (259 aa). The segment at 76–81 is interaction with KEAP1; it reads NVEFGE. S86 bears the Phosphoserine mark. 3 positions are modified to N6-acetyllysine: K115, K143, and K190.

It belongs to the phosphoglycerate mutase family. BPG-dependent PGAM subfamily. In terms of assembly, dimer. Forms a ternary complex with NFE2L2 and KEAP1. Interacts with BCL2L1 and MAP3K5. Upon TNF-induced necrosis, forms in complex with RIPK1, RIPK3 and MLKL; the formation of this complex leads to PGAM5 phosphorylation. Isoform 2, but not isoform 1, interacts with DNM1L; this interaction leads to DNM1L dephosphorylation and activation and eventually to mitochondria fragmentation. Post-translationally, phosphorylated by the RIPK1/RIPK3 complex under necrotic conditions. This phosphorylation increases PGAM5 phosphatase activity. Proteolytically cleaved by PARL in response to loss of mitochondrial membrane potential.

Its subcellular location is the mitochondrion outer membrane. It localises to the mitochondrion inner membrane. It catalyses the reaction O-phospho-L-seryl-[protein] + H2O = L-seryl-[protein] + phosphate. It carries out the reaction O-phospho-L-threonyl-[protein] + H2O = L-threonyl-[protein] + phosphate. Mitochondrial serine/threonine phosphatase that dephosphorylates various substrates and thus plays a role in different biological processes including cellular senescence or mitophagy. Modulates cellular senescence by regulating mitochondrial dynamics. Mechanistically, participates in mitochondrial fission through dephosphorylating DNM1L/DRP1. Additionally, dephosphorylates MFN2 in a stress-sensitive manner and consequently protects it from ubiquitination and degradation to promote mitochondrial network formation. Regulates mitophagy independent of PARKIN by interacting with and dephosphorylating FUNDC1, which interacts with LC3. Regulates anti-oxidative response by forming a tertiary complex with KEAP1 and NRF2. Regulates necroptosis by acting as a RIPK3 target and recruiting the RIPK1-RIPK3-MLKL necrosis 'attack' complex to mitochondria. This Rattus norvegicus (Rat) protein is Serine/threonine-protein phosphatase PGAM5, mitochondrial (Pgam5).